The chain runs to 213 residues: CDP-diacylglycerol--inositol 3-phosphatidyltransferase (213 aa).

At 1 to 5 (MPDEN) the chain is on the cytoplasmic side. Residues 6-26 (IFLFVPNLIGYARIVFAIISF) form a helical membrane-spanning segment. Residue Tyr27 is a topological domain, lumenal. A helical membrane pass occupies residues 28–48 (FMPCCPLTASSFYLLSGLLDA). Mg(2+) is bound by residues Asp47 and Asp50. Residues 49–73 (FDGHAARALNQGTRFGAMLDMLTDR) are Cytoplasmic-facing. A CDP-1,2-diacyl-sn-glycerol is bound by residues Gly51, Arg55, and Thr61. Mg(2+) is bound by residues Asp68 and Asp72. Asp72 (proton acceptor) is an active-site residue. The chain crosses the membrane as a helical span at residues 74–94 (CSTMCLLVNLALLYPGATLFF). Residue Gln95 is a topological domain, lumenal. Residues 96–116 (ISMSLDVASHWLHLHSSVVRG) form a helical membrane-spanning segment. The Cytoplasmic portion of the chain corresponds to 117–139 (SESHKMIDLSGNPVLRIYYTSRP). The chain crosses the membrane as a helical span at residues 140–160 (ALFTLCAGNELFYCLLYLFHF). The Lumenal portion of the chain corresponds to 161–174 (SEGPLVGSVGLFRM). A helical transmembrane segment spans residues 175 to 195 (GLWVTAPIALLKSLISVIHLI). Residues 196 to 213 (TAARNMAALDAADRAKKK) lie on the Cytoplasmic side of the membrane.

Belongs to the CDP-alcohol phosphatidyltransferase class-I family. Requires Mn(2+) as cofactor. Mg(2+) serves as cofactor. In terms of tissue distribution, detected in placenta (at protein level). Widely expressed. Higher expression in adult liver and skeletal muscle, slightly lower levels seen in pancreas, kidney, lung, placenta, brain, heart, leukocyte, colon, small intestine, ovary, testis, prostate, thymus and spleen. In fetus, expressed in kidney, liver, lung and brain.

The protein resides in the endoplasmic reticulum membrane. It is found in the cell membrane. It carries out the reaction a CDP-1,2-diacyl-sn-glycerol + myo-inositol = a 1,2-diacyl-sn-glycero-3-phospho-(1D-myo-inositol) + CMP + H(+). With respect to regulation, inhibited by PtdIns (product inhibition), phosphatidylinositol phosphate, and nucleoside di- and tri-phosphates. In terms of biological role, catalyzes the biosynthesis of phosphatidylinositol (PtdIns) as well as PtdIns:inositol exchange reaction. May thus act to reduce an excessive cellular PtdIns content. The exchange activity is due to the reverse reaction of PtdIns synthase and is dependent on CMP, which is tightly bound to the enzyme. This chain is CDP-diacylglycerol--inositol 3-phosphatidyltransferase, found in Homo sapiens (Human).